Consider the following 406-residue polypeptide: Arginine biosynthesis bifunctional protein ArgJ (406 aa).

Residues threonine 154, lysine 180, threonine 191, glutamate 278, asparagine 401, and threonine 406 each coordinate substrate. Threonine 191 (nucleophile) is an active-site residue.

This sequence belongs to the ArgJ family. In terms of assembly, heterotetramer of two alpha and two beta chains.

It localises to the cytoplasm. The catalysed reaction is N(2)-acetyl-L-ornithine + L-glutamate = N-acetyl-L-glutamate + L-ornithine. The enzyme catalyses L-glutamate + acetyl-CoA = N-acetyl-L-glutamate + CoA + H(+). Its pathway is amino-acid biosynthesis; L-arginine biosynthesis; L-ornithine and N-acetyl-L-glutamate from L-glutamate and N(2)-acetyl-L-ornithine (cyclic): step 1/1. It participates in amino-acid biosynthesis; L-arginine biosynthesis; N(2)-acetyl-L-ornithine from L-glutamate: step 1/4. In terms of biological role, catalyzes two activities which are involved in the cyclic version of arginine biosynthesis: the synthesis of N-acetylglutamate from glutamate and acetyl-CoA as the acetyl donor, and of ornithine by transacetylation between N(2)-acetylornithine and glutamate. This is Arginine biosynthesis bifunctional protein ArgJ from Gloeobacter violaceus (strain ATCC 29082 / PCC 7421).